Here is a 506-residue protein sequence, read N- to C-terminus: Protoheme IX farnesyltransferase, mitochondrial (506 aa).

The transit peptide at 1 to 42 directs the protein to the mitochondrion; that stretch reads MILRSSLGRLGVARESPLCLQCLNRSRPSFPAVNKLASISRL. Polar residues predominate over residues 45 to 61; the sequence is TVAGQSPSSSVNKTYFS. Positions 45–131 are disordered; the sequence is TVAGQSPSSS…AEPVIPPDAS (87 aa). Positions 73–88 are enriched in low complexity; it reads PSLFTSLSPSNSPSQL. Residues 89-100 show a composition bias toward polar residues; that stretch reads NRGHSTPSTSPE. Transmembrane regions (helical) follow at residues 163–183, 199–221, 247–267, 269–289, 297–317, 337–357, 390–410, and 439–459; these read FLVL…SILA, LTFL…LNMI, AAVF…YFGT, PTVT…YTPL, TWIG…AAAG, LGGW…FNAL, VLMF…HGFL, and GLFW…LVTK.

It belongs to the UbiA prenyltransferase family.

The protein resides in the mitochondrion membrane. The enzyme catalyses heme b + (2E,6E)-farnesyl diphosphate + H2O = Fe(II)-heme o + diphosphate. Functionally, converts protoheme IX and farnesyl diphosphate to heme O. The sequence is that of Protoheme IX farnesyltransferase, mitochondrial (cox10) from Emericella nidulans (strain FGSC A4 / ATCC 38163 / CBS 112.46 / NRRL 194 / M139) (Aspergillus nidulans).